Here is a 429-residue protein sequence, read N- to C-terminus: MKKQRNLRSMAAQAVEQVVEQGQSLSNILPPLQQKVSDKDKALLQELCFGVLRTLSQLDWLINKLMARPMTGKQRTVHYLIMVGLYQLLYTRIPPHAALAETVEGAVAIKRPQLKGLINGVLRQFQRQQEELLAEFNASDARYLHPSWLLKRLQKAYPEQWQSIVEANNQRPPMWLRVNRTHHSRDSWLALLDEAGMKGFPHADYPDAVRLETPAPVHALPGFEDGWVTVQDASAQGCMTWLAPQNGEHILDLCAAPGGKTTHILEVAPEAQVVAVDIDEQRLSRVYDNLKRLGMKATVKQGDGRYPSQWCGKQQFDRILLDAPCSATGVIRRHPDIKWLRRDRDIPELAQLQSEILDAIWPHLKSGGTLVYATCSVLPEENSLQIKAFLQRTADAELCETGTPEQPGKQNLPGAEEGDGFFYAKLIKK.

S-adenosyl-L-methionine-binding positions include 254 to 260 (CAAPGGK), Asp-277, Asp-303, and Asp-322. The active-site Nucleophile is the Cys-375.

This sequence belongs to the class I-like SAM-binding methyltransferase superfamily. RsmB/NOP family.

The protein localises to the cytoplasm. It carries out the reaction cytidine(967) in 16S rRNA + S-adenosyl-L-methionine = 5-methylcytidine(967) in 16S rRNA + S-adenosyl-L-homocysteine + H(+). In terms of biological role, specifically methylates the cytosine at position 967 (m5C967) of 16S rRNA. The sequence is that of Ribosomal RNA small subunit methyltransferase B from Escherichia coli O127:H6 (strain E2348/69 / EPEC).